Reading from the N-terminus, the 485-residue chain is 4-alpha-glucanotransferase (485 aa).

Belongs to the disproportionating enzyme family.

Its subcellular location is the cytoplasm. It carries out the reaction Transfers a segment of a (1-&gt;4)-alpha-D-glucan to a new position in an acceptor, which may be glucose or a (1-&gt;4)-alpha-D-glucan.. This chain is 4-alpha-glucanotransferase (malQ), found in Aquifex aeolicus (strain VF5).